A 182-amino-acid chain; its full sequence is ATP synthase subunit delta (182 aa).

This sequence belongs to the ATPase delta chain family. F-type ATPases have 2 components, F(1) - the catalytic core - and F(0) - the membrane proton channel. F(1) has five subunits: alpha(3), beta(3), gamma(1), delta(1), epsilon(1). CF(0) has four main subunits: a(1), b(1), b'(1) and c(10-14). The alpha and beta chains form an alternating ring which encloses part of the gamma chain. F(1) is attached to F(0) by a central stalk formed by the gamma and epsilon chains, while a peripheral stalk is formed by the delta, b and b' chains.

It localises to the cellular thylakoid membrane. F(1)F(0) ATP synthase produces ATP from ADP in the presence of a proton or sodium gradient. F-type ATPases consist of two structural domains, F(1) containing the extramembraneous catalytic core and F(0) containing the membrane proton channel, linked together by a central stalk and a peripheral stalk. During catalysis, ATP synthesis in the catalytic domain of F(1) is coupled via a rotary mechanism of the central stalk subunits to proton translocation. Its function is as follows. This protein is part of the stalk that links CF(0) to CF(1). It either transmits conformational changes from CF(0) to CF(1) or is implicated in proton conduction. The polypeptide is ATP synthase subunit delta (Synechococcus sp. (strain JA-3-3Ab) (Cyanobacteria bacterium Yellowstone A-Prime)).